The chain runs to 577 residues: Protein NUCLEOLAR COMPLEX ASSOCIATED 4 (577 aa).

A disordered region spans residues 230 to 263; sequence PEKQAEKSQHEMWSGSDESISEKPTDKKKKTEKG. A run of 3 helical transmembrane segments spans residues 329 to 349, 350 to 370, and 404 to 424; these read IGGVVSVMALSSLFILMTQHG, LEYPFFYEKLYALLVPSVFVA, and LSLSIPPAGSLVITALIYNLL.

It belongs to the CBF/MAK21 family. As to quaternary structure, component of the ribosomal small subunit (SSU) processome composed of at least 40 protein subunits and snoRNA U3. In terms of tissue distribution, mostly expressed in flowers and stems and at lower levels in roots, hypocotyls, siliques, leaves and seeds.

The protein resides in the nucleus membrane. It is found in the nucleus. Its subcellular location is the nucleolus. Essential protein required during embryogenesis. Involved in nucleolar processing of ribosomal RNA (rRNA) 40S and 90S ribosomal subunits and ribosome assembly; early in ribosome biogenesis, especially required during the maturation of 5.8S rRNA. Has a role in the nuclear export of 40S pre-ribosomal subunit to the cytoplasm. This is Protein NUCLEOLAR COMPLEX ASSOCIATED 4 from Arabidopsis thaliana (Mouse-ear cress).